Consider the following 341-residue polypeptide: DNA-directed RNA polymerase subunit alpha (341 aa).

The tract at residues 1–226 (MLIAQRPTIT…ELFGLVRELN (226 aa)) is alpha N-terminal domain (alpha-NTD). The tract at residues 241–341 (AALAADLALP…DQRYIETEQL (101 aa)) is alpha C-terminal domain (alpha-CTD).

Belongs to the RNA polymerase alpha chain family. Homodimer. The RNAP catalytic core consists of 2 alpha, 1 beta, 1 beta' and 1 omega subunit. When a sigma factor is associated with the core the holoenzyme is formed, which can initiate transcription.

It catalyses the reaction RNA(n) + a ribonucleoside 5'-triphosphate = RNA(n+1) + diphosphate. Its function is as follows. DNA-dependent RNA polymerase catalyzes the transcription of DNA into RNA using the four ribonucleoside triphosphates as substrates. In Acidothermus cellulolyticus (strain ATCC 43068 / DSM 8971 / 11B), this protein is DNA-directed RNA polymerase subunit alpha.